Consider the following 302-residue polypeptide: Sulfate adenylyltransferase subunit 2 (302 aa).

The protein belongs to the PAPS reductase family. CysD subfamily. As to quaternary structure, heterodimer composed of CysD, the smaller subunit, and CysN.

It carries out the reaction sulfate + ATP + H(+) = adenosine 5'-phosphosulfate + diphosphate. Its pathway is sulfur metabolism; hydrogen sulfide biosynthesis; sulfite from sulfate: step 1/3. In terms of biological role, with CysN forms the ATP sulfurylase (ATPS) that catalyzes the adenylation of sulfate producing adenosine 5'-phosphosulfate (APS) and diphosphate, the first enzymatic step in sulfur assimilation pathway. APS synthesis involves the formation of a high-energy phosphoric-sulfuric acid anhydride bond driven by GTP hydrolysis by CysN coupled to ATP hydrolysis by CysD. This Shewanella pealeana (strain ATCC 700345 / ANG-SQ1) protein is Sulfate adenylyltransferase subunit 2.